Consider the following 267-residue polypeptide: Orotidine 5'-phosphate decarboxylase (267 aa).

Lys-93 serves as the catalytic Proton donor.

It belongs to the OMP decarboxylase family. Type 2 subfamily.

It catalyses the reaction orotidine 5'-phosphate + H(+) = UMP + CO2. The protein operates within pyrimidine metabolism; UMP biosynthesis via de novo pathway; UMP from orotate: step 2/2. The sequence is that of Orotidine 5'-phosphate decarboxylase from Halobacterium salinarum (strain ATCC 29341 / DSM 671 / R1).